The sequence spans 534 residues: Pentatricopeptide repeat-containing protein At1g07590, mitochondrial (534 aa).

The N-terminal 20 residues, 1 to 20, are a transit peptide targeting the mitochondrion; sequence MRSIIALMRQREYFVQAIRR. 9 PPR repeats span residues 165–199, 200–234, 235–269, 270–300, 305–335, 339–369, 374–408, 409–443, and 451–485; these read NELL…GYRT, SHLV…KATP, HVST…GVEP, NEVS…IEKS, NWST…IRGF, RSKS…MKNV, ETEQ…GFKP, NSIT…KTSK, and WLET…KYNR.

This sequence belongs to the PPR family. P subfamily.

Its subcellular location is the mitochondrion. This chain is Pentatricopeptide repeat-containing protein At1g07590, mitochondrial, found in Arabidopsis thaliana (Mouse-ear cress).